The primary structure comprises 408 residues: Protein CNPPD1 (408 aa).

Residues 233–253 (CLLAVAYVSSVALAVASMAVI) traverse the membrane as a helical segment.

The protein belongs to the CNPPD1 family.

Its subcellular location is the membrane. The chain is Protein CNPPD1 (Cnppd1) from Rattus norvegicus (Rat).